The following is a 532-amino-acid chain: NADH-quinone oxidoreductase subunit N 2 (532 aa).

Helical transmembrane passes span Val37–Leu57, Arg63–Leu83, Phe107–Leu127, Leu133–Pro153, Leu158–Ile178, Phe192–Ala212, Val241–Val261, Leu276–Phe296, Val302–Ala322, Leu336–Ala356, Val367–Val387, Leu411–Phe431, Gly444–Leu464, and Thr504–Leu524.

It belongs to the complex I subunit 2 family. As to quaternary structure, NDH-1 is composed of 14 different subunits. Subunits NuoA, H, J, K, L, M, N constitute the membrane sector of the complex.

It is found in the cell membrane. It carries out the reaction a quinone + NADH + 5 H(+)(in) = a quinol + NAD(+) + 4 H(+)(out). Functionally, NDH-1 shuttles electrons from NADH, via FMN and iron-sulfur (Fe-S) centers, to quinones in the respiratory chain. The immediate electron acceptor for the enzyme in this species is believed to be a menaquinone. Couples the redox reaction to proton translocation (for every two electrons transferred, four hydrogen ions are translocated across the cytoplasmic membrane), and thus conserves the redox energy in a proton gradient. The polypeptide is NADH-quinone oxidoreductase subunit N 2 (Streptomyces griseus subsp. griseus (strain JCM 4626 / CBS 651.72 / NBRC 13350 / KCC S-0626 / ISP 5235)).